A 706-amino-acid polypeptide reads, in one-letter code: Polyribonucleotide nucleotidyltransferase (706 aa).

Aspartate 486 and aspartate 492 together coordinate Mg(2+). In terms of domain architecture, KH spans 553–612 (PRIHTIKISTDKIKDVIGKGGSVIRALTEETGTTIEIEDDGTVKIASTDGEKAKHAIRRI). An S1 motif domain is found at 622–690 (GRVYQGKVTR…RQGRVRLSIK (69 aa)).

This sequence belongs to the polyribonucleotide nucleotidyltransferase family. In terms of assembly, component of the RNA degradosome, which is a multiprotein complex involved in RNA processing and mRNA degradation. Requires Mg(2+) as cofactor.

Its subcellular location is the cytoplasm. It carries out the reaction RNA(n+1) + phosphate = RNA(n) + a ribonucleoside 5'-diphosphate. Involved in mRNA degradation. Catalyzes the phosphorolysis of single-stranded polyribonucleotides processively in the 3'- to 5'-direction. This chain is Polyribonucleotide nucleotidyltransferase, found in Pectobacterium carotovorum subsp. carotovorum (strain PC1).